The primary structure comprises 417 residues: uncharacterized protein (417 aa).

4 consecutive transmembrane segments (helical) span residues 87 to 107 (LVVA…GYWI), 130 to 150 (IAGT…TPSV), 177 to 197 (FFIT…VYAA), and 202 to 222 (IIDT…LWPD). Residues 366–398 (APSAPAAAEHKATSSSNSSNSSPGSSNPTTAPT) show a composition bias toward low complexity. The disordered stretch occupies residues 366 to 417 (APSAPAAAEHKATSSSNSSNSSPGSSNPTTAPTDKFRTGSPKTQPEKISAFW).

This sequence belongs to the YccS/YhfK family.

The protein localises to the cell membrane. This is an uncharacterized protein from Neisseria gonorrhoeae.